Consider the following 355-residue polypeptide: UDP-3-O-acylglucosamine N-acyltransferase (355 aa).

The Proton acceptor role is filled by histidine 246.

This sequence belongs to the transferase hexapeptide repeat family. LpxD subfamily. In terms of assembly, homotrimer.

The catalysed reaction is a UDP-3-O-[(3R)-3-hydroxyacyl]-alpha-D-glucosamine + a (3R)-hydroxyacyl-[ACP] = a UDP-2-N,3-O-bis[(3R)-3-hydroxyacyl]-alpha-D-glucosamine + holo-[ACP] + H(+). It functions in the pathway bacterial outer membrane biogenesis; LPS lipid A biosynthesis. Its function is as follows. Catalyzes the N-acylation of UDP-3-O-acylglucosamine using 3-hydroxyacyl-ACP as the acyl donor. Is involved in the biosynthesis of lipid A, a phosphorylated glycolipid that anchors the lipopolysaccharide to the outer membrane of the cell. This chain is UDP-3-O-acylglucosamine N-acyltransferase, found in Polaromonas naphthalenivorans (strain CJ2).